A 241-amino-acid chain; its full sequence is Phycocyanobilin:ferredoxin oxidoreductase (241 aa).

This sequence belongs to the HY2 family.

The enzyme catalyses (2R,3Z)-phycocyanobilin + 4 oxidized [2Fe-2S]-[ferredoxin] = biliverdin IXalpha + 4 reduced [2Fe-2S]-[ferredoxin] + 4 H(+). Its function is as follows. Catalyzes the four-electron reduction of biliverdin IX-alpha (2-electron reduction at both the A and D rings); the reaction proceeds via an isolatable 2-electron intermediate, 181,182-dihydrobiliverdin. The protein is Phycocyanobilin:ferredoxin oxidoreductase of Prochlorococcus marinus (strain MIT 9312).